A 211-amino-acid chain; its full sequence is UPF0329 protein ECU07_1880/ECU10_0020 (211 aa).

This sequence belongs to the UPF0329 family.

The chain is UPF0329 protein ECU07_1880/ECU10_0020 from Encephalitozoon cuniculi (strain GB-M1) (Microsporidian parasite).